The chain runs to 266 residues: Zinc transporter ZupT (266 aa).

A run of 8 helical transmembrane segments spans residues 8-28 (LLLTLLAGLSTGIGSAMALVV), 35-55 (FLTLALGFSAGVMLYVSFVEL), 70-90 (QAAAWVATLAFFGGIFFIWAI), 123-143 (GLFTAAAIAIHNFPEGMAVFF), 152-172 (GIVIATTIALHNIPEGMAIAV), 185-205 (FTYSFLSGLAEPLGAIVGFAI), 209-229 (WLSPPVFGSVLAAVAGIMVYI), and 246-266 (LAISGLIAGMAVMALSLLLLA). Fe(2+) contacts are provided by asparagine 134 and glutamate 137. Residues glutamate 137 and histidine 162 each coordinate Zn(2+). Fe(2+)-binding residues include asparagine 163, glutamate 166, and glutamate 195. Glutamate 166 contacts Zn(2+).

The protein belongs to the ZIP transporter (TC 2.A.5) family. ZupT subfamily.

Its subcellular location is the cell membrane. The catalysed reaction is Zn(2+)(in) = Zn(2+)(out). Its function is as follows. Mediates zinc uptake. May also transport other divalent cations. This is Zinc transporter ZupT from Chlorobium phaeovibrioides (strain DSM 265 / 1930) (Prosthecochloris vibrioformis (strain DSM 265)).